The primary structure comprises 537 residues: CTP synthase (537 aa).

An amidoligase domain region spans residues 1-267 (MTKYIFVTGG…DQIVCDHLKL (267 aa)). Ser13 provides a ligand contact to CTP. Ser13 contacts UTP. 14–19 (SIGKGI) contributes to the ATP binding site. Residue Tyr54 participates in L-glutamine binding. Asp71 is a binding site for ATP. Mg(2+) contacts are provided by Asp71 and Glu141. CTP is bound by residues 148–150 (DIE), 188–193 (KTKPTQ), and Lys224. UTP-binding positions include 188 to 193 (KTKPTQ) and Lys224. 240–242 (RDV) lines the ATP pocket. One can recognise a Glutamine amidotransferase type-1 domain in the interval 292 to 535 (RIALVGKYVE…VTAAVKNKNQ (244 aa)). Gly354 serves as a coordination point for L-glutamine. The active-site Nucleophile; for glutamine hydrolysis is Cys381. Residues 382 to 385 (LGMQ), Glu405, and Arg463 each bind L-glutamine. Active-site residues include His508 and Glu510.

Belongs to the CTP synthase family. As to quaternary structure, homotetramer.

The catalysed reaction is UTP + L-glutamine + ATP + H2O = CTP + L-glutamate + ADP + phosphate + 2 H(+). The enzyme catalyses L-glutamine + H2O = L-glutamate + NH4(+). It catalyses the reaction UTP + NH4(+) + ATP = CTP + ADP + phosphate + 2 H(+). The protein operates within pyrimidine metabolism; CTP biosynthesis via de novo pathway; CTP from UDP: step 2/2. Allosterically activated by GTP, when glutamine is the substrate; GTP has no effect on the reaction when ammonia is the substrate. The allosteric effector GTP functions by stabilizing the protein conformation that binds the tetrahedral intermediate(s) formed during glutamine hydrolysis. Inhibited by the product CTP, via allosteric rather than competitive inhibition. Its function is as follows. Catalyzes the ATP-dependent amination of UTP to CTP with either L-glutamine or ammonia as the source of nitrogen. Regulates intracellular CTP levels through interactions with the four ribonucleotide triphosphates. This Streptococcus equi subsp. zooepidemicus (strain H70) protein is CTP synthase.